Here is a 337-residue protein sequence, read N- to C-terminus: Cytoskeleton protein RodZ (337 aa).

At 1–111 the chain is on the cytoplasmic side; the sequence is MNTEATHDQN…LGKRRKKRDG (111 aa). Residues 19–71 form the HTH cro/C1-type domain; that stretch reads LRNAREQLGLSQQAVAERLCLKVSTVRDIEEDKAPADLASTFLRGYIRSYARL. A DNA-binding region (H-T-H motif) is located at residues 30–49; that stretch reads QQAVAERLCLKVSTVRDIEE. Residues 112–132 traverse the membrane as a helical; Signal-anchor for type II membrane protein segment; that stretch reads WLMTFTWLVLFVVIGLSGAWW. Residues 133–337 are Periplasmic-facing; the sequence is WQDHKAQQEE…TLNAEQSPAQ (205 aa). Polar residues predominate over residues 145–167; that stretch reads TMADQSSAELSSNSEQGQSVPLN. The disordered stretch occupies residues 145–235; the sequence is TMADQSSAEL…PTAATTPDGA (91 aa). Positions 168-207 are enriched in low complexity; the sequence is TSTTTDPATTSTPPASVDTTATNTQTPAVTAPAPAVDPQQ. A compositionally biased stretch (polar residues) spans 208–218; that stretch reads NAVVSPSQANV. Low complexity predominate over residues 219-235; the sequence is DTAATPAPTAATTPDGA.

The protein belongs to the RodZ family.

Its subcellular location is the cell inner membrane. Functionally, cytoskeletal protein that is involved in cell-shape control through regulation of the length of the long axis. This chain is Cytoskeleton protein RodZ, found in Shigella boydii serotype 4 (strain Sb227).